Reading from the N-terminus, the 355-residue chain is Aromatic amino acid aminotransferase (355 aa).

Lysine 217 is subject to N6-(pyridoxal phosphate)lysine.

This sequence belongs to the class-II pyridoxal-phosphate-dependent aminotransferase family. Homodimer. Pyridoxal 5'-phosphate serves as cofactor.

It catalyses the reaction an aromatic L-alpha-amino acid + 2-oxoglutarate = an aromatic oxo-acid + L-glutamate. Functionally, aminotransferase that catalyzes the conversion of aromatic amino acids and 2-oxoglutarate into corresponding aromatic oxo acids and L-glutamate. In Mycobacterium avium (strain 104), this protein is Aromatic amino acid aminotransferase.